Reading from the N-terminus, the 410-residue chain is Arginine deiminase (410 aa).

C400 functions as the Amidino-cysteine intermediate in the catalytic mechanism.

Belongs to the arginine deiminase family.

The protein resides in the cytoplasm. The enzyme catalyses L-arginine + H2O = L-citrulline + NH4(+). It functions in the pathway amino-acid degradation; L-arginine degradation via ADI pathway; carbamoyl phosphate from L-arginine: step 1/2. This chain is Arginine deiminase, found in Bacillus thuringiensis subsp. konkukian (strain 97-27).